The following is a 462-amino-acid chain: Flavin-containing monooxygenase FMO GS-OX3 (462 aa).

17 to 22 (GAGPAG) contacts FAD. 212–217 (GNFASG) contributes to the NADP(+) binding site. The helical transmembrane segment at 318 to 338 (ALAPGLAFVGLPAMGIVFVMF) threads the bilayer.

It belongs to the FMO family.

It localises to the membrane. The enzyme catalyses a (Z)-omega-(methylsulfanyl)-N-sulfo-alkylhydroximate S-glucoside + NADPH + O2 + H(+) = a (Z)-omega-(methylsulfinyl)-alkyl-glucosinolate + NADP(+) + H2O. Functionally, catalyzes the conversion of methylthioalkyl glucosinolates of any chain length into methylsulfinylalkyl glucosinolates. Prefers probably short-chain methylthioalkyl glucosinolates in cv. Landsberg erecta. This Arabidopsis thaliana (Mouse-ear cress) protein is Flavin-containing monooxygenase FMO GS-OX3 (FMOGS-OX3).